The primary structure comprises 942 residues: Probable serine/threonine-protein kinase DDB_G0279719 (942 aa).

Positions 4–617 constitute a Protein kinase domain; the sequence is YEVVKLIGVG…IDLILQNKLF (614 aa). ATP is bound by residues 10–18 and Lys33; that span reads IGVGGEAKA. 4 disordered regions span residues 109–170, 247–303, 352–371, and 408–445; these read NNNQ…INNN, SFSN…NGNT, QPPQ…GADV, and NDPS…LNIN. The segment covering 258 to 272 has biased composition (low complexity); it reads NSNDSNLHQSSSNSS. The span at 288-303 shows a compositional bias: polar residues; the sequence is SPGTSTPYQKGSNGNT. Low complexity-rich tracts occupy residues 353 to 367 and 410 to 432; these read PPQS…SSPT and PSSH…PQSP. Asp487 acts as the Proton acceptor in catalysis. The interval 642-686 is disordered; that stretch reads TNSKSNSSNNLNNSNSNNDIINNNNNNNSSNNINNNNIVNLNNSY. Residues 675–703 are a coiled coil; it reads NNNNIVNLNNSYNNKQDKCEQRNKSLNQN.

The protein belongs to the protein kinase superfamily. Ser/Thr protein kinase family.

The catalysed reaction is L-seryl-[protein] + ATP = O-phospho-L-seryl-[protein] + ADP + H(+). It carries out the reaction L-threonyl-[protein] + ATP = O-phospho-L-threonyl-[protein] + ADP + H(+). The protein is Probable serine/threonine-protein kinase DDB_G0279719 of Dictyostelium discoideum (Social amoeba).